A 66-amino-acid polypeptide reads, in one-letter code: Large ribosomal subunit protein bL35 (66 aa).

The segment covering 1 to 46 has biased composition (basic residues); it reads MPKMKTHRASAKRFKRTANGGLKRHHAFTGHRFHGKTKKQRRHLRK. The interval 1 to 52 is disordered; the sequence is MPKMKTHRASAKRFKRTANGGLKRHHAFTGHRFHGKTKKQRRHLRKPAMVSR.

It belongs to the bacterial ribosomal protein bL35 family.

The chain is Large ribosomal subunit protein bL35 from Lactobacillus acidophilus (strain ATCC 700396 / NCK56 / N2 / NCFM).